The primary structure comprises 282 residues: ATP phosphoribosyltransferase (282 aa).

The protein belongs to the ATP phosphoribosyltransferase family. Long subfamily. Requires Mg(2+) as cofactor.

It is found in the cytoplasm. It catalyses the reaction 1-(5-phospho-beta-D-ribosyl)-ATP + diphosphate = 5-phospho-alpha-D-ribose 1-diphosphate + ATP. It functions in the pathway amino-acid biosynthesis; L-histidine biosynthesis; L-histidine from 5-phospho-alpha-D-ribose 1-diphosphate: step 1/9. With respect to regulation, feedback inhibited by histidine. In terms of biological role, catalyzes the condensation of ATP and 5-phosphoribose 1-diphosphate to form N'-(5'-phosphoribosyl)-ATP (PR-ATP). Has a crucial role in the pathway because the rate of histidine biosynthesis seems to be controlled primarily by regulation of HisG enzymatic activity. This is ATP phosphoribosyltransferase from Pyrobaculum islandicum (strain DSM 4184 / JCM 9189 / GEO3).